A 232-amino-acid polypeptide reads, in one-letter code: tRNA1(Val) (adenine(37)-N6)-methyltransferase (232 aa).

It belongs to the methyltransferase superfamily. tRNA (adenine-N(6)-)-methyltransferase family.

The protein resides in the cytoplasm. The catalysed reaction is adenosine(37) in tRNA1(Val) + S-adenosyl-L-methionine = N(6)-methyladenosine(37) in tRNA1(Val) + S-adenosyl-L-homocysteine + H(+). Its function is as follows. Specifically methylates the adenine in position 37 of tRNA(1)(Val) (anticodon cmo5UAC). The polypeptide is tRNA1(Val) (adenine(37)-N6)-methyltransferase (Haemophilus influenzae (strain PittGG)).